Here is a 113-residue protein sequence, read N- to C-terminus: Retrotransposon Gag-like protein 8 (113 aa).

This sequence belongs to the FAM127 family.

This chain is Retrotransposon Gag-like protein 8 (RTL8A), found in Bos taurus (Bovine).